Reading from the N-terminus, the 143-residue chain is Nucleoside diphosphate kinase (143 aa).

6 residues coordinate ATP: Lys-11, Phe-59, Arg-87, Thr-93, Arg-104, and Asn-114. His-117 acts as the Pros-phosphohistidine intermediate in catalysis.

This sequence belongs to the NDK family. Homotetramer. The cofactor is Mg(2+).

The protein localises to the cytoplasm. It catalyses the reaction a 2'-deoxyribonucleoside 5'-diphosphate + ATP = a 2'-deoxyribonucleoside 5'-triphosphate + ADP. The enzyme catalyses a ribonucleoside 5'-diphosphate + ATP = a ribonucleoside 5'-triphosphate + ADP. Its function is as follows. Major role in the synthesis of nucleoside triphosphates other than ATP. The ATP gamma phosphate is transferred to the NDP beta phosphate via a ping-pong mechanism, using a phosphorylated active-site intermediate. In Cronobacter sakazakii (strain ATCC BAA-894) (Enterobacter sakazakii), this protein is Nucleoside diphosphate kinase.